A 395-amino-acid polypeptide reads, in one-letter code: Chorismate synthase (395 aa).

Residues Arg-40 and Arg-46 each coordinate NADP(+). FMN contacts are provided by residues 135–137 and 256–257; these read RAS and QA. The span at 272–283 shows a compositional bias: basic and acidic residues; sequence RRGSQAHDEMRP. The interval 272–296 is disordered; that stretch reads RRGSQAHDEMRPGPDGILRSTNRAG. Residues Gly-300, 315-319, and Arg-341 contribute to the FMN site; that span reads KPIST.

This sequence belongs to the chorismate synthase family. Homotetramer. FMNH2 serves as cofactor.

The enzyme catalyses 5-O-(1-carboxyvinyl)-3-phosphoshikimate = chorismate + phosphate. Its pathway is metabolic intermediate biosynthesis; chorismate biosynthesis; chorismate from D-erythrose 4-phosphate and phosphoenolpyruvate: step 7/7. Functionally, catalyzes the anti-1,4-elimination of the C-3 phosphate and the C-6 proR hydrogen from 5-enolpyruvylshikimate-3-phosphate (EPSP) to yield chorismate, which is the branch point compound that serves as the starting substrate for the three terminal pathways of aromatic amino acid biosynthesis. This reaction introduces a second double bond into the aromatic ring system. This is Chorismate synthase from Rhodococcus jostii (strain RHA1).